A 49-amino-acid chain; its full sequence is LAKTNFPLNFPIHVRDAGVQWSPLGRLTTGADVRHEIPARVGHRLARWA.

Homooligomer. Glycosylated.

Functionally, beta-galactoside specific lectin. Has a hemagglutinating activity on erythrocytes. This chain is Agglutinin-1, found in Pomacea flagellata (Apple snail).